A 303-amino-acid polypeptide reads, in one-letter code: Succinate--CoA ligase [ADP-forming] subunit alpha (303 aa).

Residues 20-23 (TGSE), Lys46, and 108-110 (ITE) contribute to the CoA site. Residue Tyr173 participates in substrate binding. The active-site Tele-phosphohistidine intermediate is His259.

This sequence belongs to the succinate/malate CoA ligase alpha subunit family. In terms of assembly, heterotetramer of two alpha and two beta subunits.

It catalyses the reaction succinate + ATP + CoA = succinyl-CoA + ADP + phosphate. The catalysed reaction is GTP + succinate + CoA = succinyl-CoA + GDP + phosphate. It functions in the pathway carbohydrate metabolism; tricarboxylic acid cycle; succinate from succinyl-CoA (ligase route): step 1/1. Succinyl-CoA synthetase functions in the citric acid cycle (TCA), coupling the hydrolysis of succinyl-CoA to the synthesis of either ATP or GTP and thus represents the only step of substrate-level phosphorylation in the TCA. The alpha subunit of the enzyme binds the substrates coenzyme A and phosphate, while succinate binding and nucleotide specificity is provided by the beta subunit. The protein is Succinate--CoA ligase [ADP-forming] subunit alpha of Mycobacterium tuberculosis (strain CDC 1551 / Oshkosh).